Consider the following 1400-residue polypeptide: DNA-directed RNA polymerase subunit beta' (1400 aa).

Residues Cys71, Cys73, Cys86, and Cys89 each contribute to the Zn(2+) site. Positions 462, 464, and 466 each coordinate Mg(2+). Cys810, Cys884, Cys891, and Cys894 together coordinate Zn(2+). The segment at 1378-1400 (EKQATIVPPAAPEAEPLALPPAE) is disordered.

Belongs to the RNA polymerase beta' chain family. In terms of assembly, the RNAP catalytic core consists of 2 alpha, 1 beta, 1 beta' and 1 omega subunit. When a sigma factor is associated with the core the holoenzyme is formed, which can initiate transcription. Mg(2+) serves as cofactor. Zn(2+) is required as a cofactor.

It carries out the reaction RNA(n) + a ribonucleoside 5'-triphosphate = RNA(n+1) + diphosphate. Its function is as follows. DNA-dependent RNA polymerase catalyzes the transcription of DNA into RNA using the four ribonucleoside triphosphates as substrates. This is DNA-directed RNA polymerase subunit beta' from Rhodopseudomonas palustris (strain BisB5).